A 257-amino-acid chain; its full sequence is Diphthine synthase (257 aa).

S-adenosyl-L-methionine-binding positions include Leu-9, Asp-85, Val-88, 113–114 (SI), Leu-164, Ala-207, and His-232.

This sequence belongs to the diphthine synthase family. Homodimer.

It carries out the reaction 2-[(3S)-amino-3-carboxypropyl]-L-histidyl-[translation elongation factor 2] + 3 S-adenosyl-L-methionine = diphthine-[translation elongation factor 2] + 3 S-adenosyl-L-homocysteine + 3 H(+). Its pathway is protein modification; peptidyl-diphthamide biosynthesis. In terms of biological role, S-adenosyl-L-methionine-dependent methyltransferase that catalyzes the trimethylation of the amino group of the modified target histidine residue in translation elongation factor 2 (EF-2), to form an intermediate called diphthine. The three successive methylation reactions represent the second step of diphthamide biosynthesis. This Methanococcus aeolicus (strain ATCC BAA-1280 / DSM 17508 / OCM 812 / Nankai-3) protein is Diphthine synthase.